We begin with the raw amino-acid sequence, 342 residues long: Phenylalanine--tRNA ligase alpha subunit (342 aa).

E255 contacts Mg(2+).

This sequence belongs to the class-II aminoacyl-tRNA synthetase family. Phe-tRNA synthetase alpha subunit type 1 subfamily. Tetramer of two alpha and two beta subunits. It depends on Mg(2+) as a cofactor.

Its subcellular location is the cytoplasm. It carries out the reaction tRNA(Phe) + L-phenylalanine + ATP = L-phenylalanyl-tRNA(Phe) + AMP + diphosphate + H(+). The sequence is that of Phenylalanine--tRNA ligase alpha subunit from Pelotomaculum thermopropionicum (strain DSM 13744 / JCM 10971 / SI).